We begin with the raw amino-acid sequence, 457 residues long: tRNA-2-methylthio-N(6)-dimethylallyladenosine synthase (457 aa).

Positions 3–120 (KKVYVKTFGC…LPQMIDARRE (118 aa)) constitute an MTTase N-terminal domain. Residues cysteine 12, cysteine 49, cysteine 83, cysteine 157, cysteine 161, and cysteine 164 each contribute to the [4Fe-4S] cluster site. Positions 143 to 377 (RVEGPSAFVS…QATIEENVAR (235 aa)) constitute a Radical SAM core domain. The TRAM domain maps to 380 to 447 (QSMLGKVERI…PHSLRGELVL (68 aa)).

It belongs to the methylthiotransferase family. MiaB subfamily. In terms of assembly, monomer. [4Fe-4S] cluster serves as cofactor.

The protein localises to the cytoplasm. It carries out the reaction N(6)-dimethylallyladenosine(37) in tRNA + (sulfur carrier)-SH + AH2 + 2 S-adenosyl-L-methionine = 2-methylsulfanyl-N(6)-dimethylallyladenosine(37) in tRNA + (sulfur carrier)-H + 5'-deoxyadenosine + L-methionine + A + S-adenosyl-L-homocysteine + 2 H(+). Catalyzes the methylthiolation of N6-(dimethylallyl)adenosine (i(6)A), leading to the formation of 2-methylthio-N6-(dimethylallyl)adenosine (ms(2)i(6)A) at position 37 in tRNAs that read codons beginning with uridine. This is tRNA-2-methylthio-N(6)-dimethylallyladenosine synthase from Burkholderia pseudomallei (strain 1710b).